A 125-amino-acid polypeptide reads, in one-letter code: Fluoride-specific ion channel FluC (125 aa).

Transmembrane regions (helical) follow at residues 4 to 24 (ILLVGAGGALGSVLRYLVGLW), 32 to 52 (AFPWGTLFVNVTGSFLIGFLA), 68 to 88 (FLITGVLGGYTTFSAFSLDAI), and 100 to 120 (LAYIVASVGLSMLAVFAGLAL). 2 residues coordinate Na(+): Gly-75 and Thr-78.

The protein belongs to the fluoride channel Fluc/FEX (TC 1.A.43) family.

It localises to the cell inner membrane. The catalysed reaction is fluoride(in) = fluoride(out). Its activity is regulated as follows. Na(+) is not transported, but it plays an essential structural role and its presence is essential for fluoride channel function. Functionally, fluoride-specific ion channel. Important for reducing fluoride concentration in the cell, thus reducing its toxicity. The protein is Fluoride-specific ion channel FluC of Rhizobium meliloti (strain 1021) (Ensifer meliloti).